A 399-amino-acid chain; its full sequence is Phosphoglycerate kinase (399 aa).

Residues 22–24 (DFN), R38, 61–64 (HLGR), R119, and R152 each bind substrate. Residues K205, G296, E327, and 353–356 (GGDT) contribute to the ATP site.

Belongs to the phosphoglycerate kinase family. Monomer.

It is found in the cytoplasm. The catalysed reaction is (2R)-3-phosphoglycerate + ATP = (2R)-3-phospho-glyceroyl phosphate + ADP. The protein operates within carbohydrate degradation; glycolysis; pyruvate from D-glyceraldehyde 3-phosphate: step 2/5. This is Phosphoglycerate kinase from Nitratiruptor sp. (strain SB155-2).